The following is a 310-amino-acid chain: Putative HTH-type transcriptional regulatory protein SSO0942 (310 aa).

Residues 125–180 form the HTH cro/C1-type domain; the sequence is LKHKREEMGYSIGDVAKFLGVSRKAIYDYEKGDSDVSLEVAEKLIDLFGDDIIGDV. The H-T-H motif DNA-binding region spans 136–155; the sequence is IGDVAKFLGVSRKAIYDYEK.

The polypeptide is Putative HTH-type transcriptional regulatory protein SSO0942 (Saccharolobus solfataricus (strain ATCC 35092 / DSM 1617 / JCM 11322 / P2) (Sulfolobus solfataricus)).